Consider the following 292-residue polypeptide: Pyridoxal 5'-phosphate synthase subunit PdxS (292 aa).

Asp-22 contacts D-ribose 5-phosphate. Lys-79 acts as the Schiff-base intermediate with D-ribose 5-phosphate in catalysis. Gly-151 serves as a coordination point for D-ribose 5-phosphate. D-glyceraldehyde 3-phosphate is bound at residue Arg-163. D-ribose 5-phosphate-binding positions include Gly-212 and 233-234; that span reads GS.

This sequence belongs to the PdxS/SNZ family. In the presence of PdxT, forms a dodecamer of heterodimers.

The enzyme catalyses aldehydo-D-ribose 5-phosphate + D-glyceraldehyde 3-phosphate + L-glutamine = pyridoxal 5'-phosphate + L-glutamate + phosphate + 3 H2O + H(+). Its pathway is cofactor biosynthesis; pyridoxal 5'-phosphate biosynthesis. In terms of biological role, catalyzes the formation of pyridoxal 5'-phosphate from ribose 5-phosphate (RBP), glyceraldehyde 3-phosphate (G3P) and ammonia. The ammonia is provided by the PdxT subunit. Can also use ribulose 5-phosphate and dihydroxyacetone phosphate as substrates, resulting from enzyme-catalyzed isomerization of RBP and G3P, respectively. The polypeptide is Pyridoxal 5'-phosphate synthase subunit PdxS (Thermoanaerobacter pseudethanolicus (strain ATCC 33223 / 39E) (Clostridium thermohydrosulfuricum)).